We begin with the raw amino-acid sequence, 802 residues long: Penicillin G acylase (802 aa).

The first 24 residues, Met1–Ala24, serve as a signal peptide directing secretion. Residue Glu177 participates in Ca(2+) binding. A propeptide spans Ser235–Gly265 (spacer peptide). Ser266 serves as the catalytic Nucleophile. Asp341 is a Ca(2+) binding site.

It belongs to the peptidase S45 family. As to quaternary structure, heterodimer of an alpha subunit and a beta subunit processed from the same precursor. The cofactor is Ca(2+).

It is found in the secreted. The catalysed reaction is a penicillin + H2O = 6-aminopenicillanate + a carboxylate. This chain is Penicillin G acylase (pac), found in Priestia megaterium (Bacillus megaterium).